The primary structure comprises 162 residues: Cyanate hydratase (162 aa).

Catalysis depends on residues R103, E106, and S129.

It belongs to the cyanase family.

The enzyme catalyses cyanate + hydrogencarbonate + 3 H(+) = NH4(+) + 2 CO2. Its function is as follows. Catalyzes the reaction of cyanate with bicarbonate to produce ammonia and carbon dioxide. The polypeptide is Cyanate hydratase (Phaeosphaeria nodorum (strain SN15 / ATCC MYA-4574 / FGSC 10173) (Glume blotch fungus)).